Consider the following 468-residue polypeptide: Argininosuccinate lyase (468 aa).

It belongs to the lyase 1 family. Argininosuccinate lyase subfamily.

The protein resides in the cytoplasm. It catalyses the reaction 2-(N(omega)-L-arginino)succinate = fumarate + L-arginine. It functions in the pathway amino-acid biosynthesis; L-arginine biosynthesis; L-arginine from L-ornithine and carbamoyl phosphate: step 3/3. The sequence is that of Argininosuccinate lyase from Paraburkholderia phytofirmans (strain DSM 17436 / LMG 22146 / PsJN) (Burkholderia phytofirmans).